The following is a 234-amino-acid chain: Inner membrane protein YbhL (234 aa).

At 1 to 23 (MDRFPRSDSIVQPRAGLQTYMAQ) the chain is on the periplasmic side. Residues 24–44 (VYGWMTVGLLLTAFVAWYAAN) form a helical membrane-spanning segment. Residues 45–56 (SAAVMELLFTNR) are Cytoplasmic-facing. A helical membrane pass occupies residues 57–77 (VFLIGLIIAQLALVIVLSAMI). Topologically, residues 78 to 79 (QK) are periplasmic. The chain crosses the membrane as a helical span at residues 80-100 (LSAGVTTMLFMLYSALTGLTL). Topologically, residues 101–102 (SS) are cytoplasmic. A helical membrane pass occupies residues 103–123 (IFIVYTAASIASTFVVTAGMF). The Periplasmic portion of the chain corresponds to 124 to 136 (GAMSLYGYTTKRD). A helical transmembrane segment spans residues 137–157 (LSGFGNMLFMALIGIVLASLV). Residues 158-163 (NFWLKS) lie on the Cytoplasmic side of the membrane. A helical transmembrane segment spans residues 164–184 (EALMWAVTYIGVIVFVGLTAY). Residues 185–206 (DTQKLKNMGEQIDTRDTSNLRK) lie on the Periplasmic side of the membrane. Residues 207 to 227 (YSILGALTLYLDFINLFLMLL) form a helical membrane-spanning segment. Over 228–234 (RIFGNRR) the chain is Cytoplasmic.

The protein belongs to the BI1 family.

The protein localises to the cell inner membrane. The chain is Inner membrane protein YbhL (ybhL) from Escherichia coli (strain K12).